Consider the following 151-residue polypeptide: SsrA-binding protein (151 aa).

It belongs to the SmpB family.

The protein resides in the cytoplasm. Functionally, required for rescue of stalled ribosomes mediated by trans-translation. Binds to transfer-messenger RNA (tmRNA), required for stable association of tmRNA with ribosomes. tmRNA and SmpB together mimic tRNA shape, replacing the anticodon stem-loop with SmpB. tmRNA is encoded by the ssrA gene; the 2 termini fold to resemble tRNA(Ala) and it encodes a 'tag peptide', a short internal open reading frame. During trans-translation Ala-aminoacylated tmRNA acts like a tRNA, entering the A-site of stalled ribosomes, displacing the stalled mRNA. The ribosome then switches to translate the ORF on the tmRNA; the nascent peptide is terminated with the 'tag peptide' encoded by the tmRNA and targeted for degradation. The ribosome is freed to recommence translation, which seems to be the essential function of trans-translation. The chain is SsrA-binding protein from Chlamydia pneumoniae (Chlamydophila pneumoniae).